A 406-amino-acid polypeptide reads, in one-letter code: Probable 2,3-bisphosphoglycerate-independent phosphoglycerate mutase (406 aa).

Belongs to the BPG-independent phosphoglycerate mutase family. A-PGAM subfamily.

It carries out the reaction (2R)-2-phosphoglycerate = (2R)-3-phosphoglycerate. Its pathway is carbohydrate degradation; glycolysis; pyruvate from D-glyceraldehyde 3-phosphate: step 3/5. Functionally, catalyzes the interconversion of 2-phosphoglycerate and 3-phosphoglycerate. This Thermus thermophilus (strain ATCC 27634 / DSM 579 / HB8) protein is Probable 2,3-bisphosphoglycerate-independent phosphoglycerate mutase.